Consider the following 220-residue polypeptide: Demethylmenaquinone methyltransferase (220 aa).

Residues threonine 47, aspartate 67, and aspartate 93–alanine 94 contribute to the S-adenosyl-L-methionine site.

It belongs to the class I-like SAM-binding methyltransferase superfamily. MenG/UbiE family.

It carries out the reaction a 2-demethylmenaquinol + S-adenosyl-L-methionine = a menaquinol + S-adenosyl-L-homocysteine + H(+). It participates in quinol/quinone metabolism; menaquinone biosynthesis; menaquinol from 1,4-dihydroxy-2-naphthoate: step 2/2. Methyltransferase required for the conversion of demethylmenaquinol (DMKH2) to menaquinol (MKH2). This Thermus thermophilus (strain ATCC BAA-163 / DSM 7039 / HB27) protein is Demethylmenaquinone methyltransferase.